A 287-amino-acid chain; its full sequence is 2-dehydro-3-deoxyphosphooctonate aldolase (287 aa).

Belongs to the KdsA family.

It localises to the cytoplasm. The catalysed reaction is D-arabinose 5-phosphate + phosphoenolpyruvate + H2O = 3-deoxy-alpha-D-manno-2-octulosonate-8-phosphate + phosphate. Its pathway is carbohydrate biosynthesis; 3-deoxy-D-manno-octulosonate biosynthesis; 3-deoxy-D-manno-octulosonate from D-ribulose 5-phosphate: step 2/3. The protein operates within bacterial outer membrane biogenesis; lipopolysaccharide biosynthesis. This chain is 2-dehydro-3-deoxyphosphooctonate aldolase, found in Caulobacter vibrioides (strain ATCC 19089 / CIP 103742 / CB 15) (Caulobacter crescentus).